A 299-amino-acid polypeptide reads, in one-letter code: Sulfate adenylyltransferase subunit 2 (299 aa).

This sequence belongs to the PAPS reductase family. CysD subfamily. Heterodimer composed of CysD, the smaller subunit, and CysN.

The enzyme catalyses sulfate + ATP + H(+) = adenosine 5'-phosphosulfate + diphosphate. It participates in sulfur metabolism; hydrogen sulfide biosynthesis; sulfite from sulfate: step 1/3. Functionally, with CysN forms the ATP sulfurylase (ATPS) that catalyzes the adenylation of sulfate producing adenosine 5'-phosphosulfate (APS) and diphosphate, the first enzymatic step in sulfur assimilation pathway. APS synthesis involves the formation of a high-energy phosphoric-sulfuric acid anhydride bond driven by GTP hydrolysis by CysN coupled to ATP hydrolysis by CysD. The chain is Sulfate adenylyltransferase subunit 2 from Colwellia psychrerythraea (strain 34H / ATCC BAA-681) (Vibrio psychroerythus).